We begin with the raw amino-acid sequence, 1218 residues long: Cytosolic carboxypeptidase 1 (1218 aa).

Disordered stretches follow at residues 476 to 512 and 590 to 617; these read VVMKERASPKGEEAKEDPKGHDRTLPQQLGGQSRVAP and TEDDEDTESHSSTEQAPSVEASDGPTLH. Positions 477-499 are enriched in basic and acidic residues; sequence VMKERASPKGEEAKEDPKGHDRT. Positions 840–1130 constitute a Peptidase M14 domain; it reads YPYTYSTLQM…KFCVGLLRLK (291 aa). Zn(2+) is bound by residues H912, E915, and H1009. Residue E1094 is the Proton donor/acceptor of the active site. The residue at position 1160 (S1160) is a Phosphoserine. The interval 1193–1218 is disordered; that stretch reads ENTGDYEPSAQEEALSDSEVSRTHLI.

The protein belongs to the peptidase M14 family. Interacts with MYLK. It depends on Zn(2+) as a cofactor. In terms of tissue distribution, widely expressed. Highly expressed in the cerebellum and cortex of adult mouse brain. Expressed at similar levels in both the cerebellum and the cortex throughout all developmental stages. Also expressed in sciatic nerve transection, spinal motor neurons undergoing axon regeneration, testis, heart, eye, lung, pancreas, intestine, stomach, pituitary, spleen, adrenal, kidney and in developing brain. Expression in cranial motor nuclei is the same as that observed in uninjured primary motor neurons. Expression is prevalent in sensory neurons and hippocampal CA3 neurons in addition to regenerating motor neurons.

It is found in the cytoplasm. The protein resides in the cytosol. The protein localises to the nucleus. It localises to the mitochondrion. It carries out the reaction (L-glutamyl)(n+1)-gamma-L-glutamyl-L-glutamyl-[protein] + H2O = (L-glutamyl)(n)-gamma-L-glutamyl-L-glutamyl-[protein] + L-glutamate. It catalyses the reaction C-terminal L-alpha-aminoacyl-L-glutamyl-L-glutamyl-[tubulin] + H2O = C-terminal L-alpha-aminoacyl-L-glutamyl-[tubulin] + L-glutamate. Its function is as follows. Metallocarboxypeptidase that mediates protein deglutamylation of tubulin and non-tubulin target proteins. Catalyzes the removal of polyglutamate side chains present on the gamma-carboxyl group of glutamate residues within the C-terminal tail of alpha- and beta-tubulin. Specifically cleaves tubulin long-side-chains, while it is not able to remove the branching point glutamate. Also catalyzes the removal of polyglutamate residues from the carboxy-terminus of alpha-tubulin as well as non-tubulin proteins such as MYLK. Involved in KLF4 deglutamylation which promotes KLF4 proteasome-mediated degradation, thereby negatively regulating cell pluripotency maintenance and embryogenesis. The protein is Cytosolic carboxypeptidase 1 of Mus musculus (Mouse).